The sequence spans 135 residues: Evasin P1134 (135 aa).

Residues 1–31 form the signal peptide; sequence MEVKTFAFLQIAVFIALGIQIFAAVTAAADA. Disulfide bonds link Cys-41/Cys-63, Cys-45/Cys-65, and Cys-56/Cys-76. Asn-44 is a glycosylation site (N-linked (GlcNAc...) asparagine). A disordered region spans residues 88 to 112; it reads ETPSNSDLEAATPRPRKTLYPVRNP.

The protein localises to the secreted. Salivary chemokine-binding protein which binds to host chemokine CXCL1. The polypeptide is Evasin P1134 (Ixodes ricinus (Common tick)).